The following is a 619-amino-acid chain: Guanylate cyclase soluble subunit beta-1 (619 aa).

Residue histidine 105 coordinates heme. In terms of domain architecture, Guanylate cyclase spans threonine 421 to glutamate 554.

The protein belongs to the adenylyl cyclase class-4/guanylyl cyclase family. As to quaternary structure, the active enzyme is formed by a heterodimer of an alpha and a beta subunit. Heterodimer with GUCY1A1. Can also form inactive homodimers in vitro. It depends on heme as a cofactor. Lung and brain.

It is found in the cytoplasm. The catalysed reaction is GTP = 3',5'-cyclic GMP + diphosphate. With respect to regulation, activated by nitric oxide in the presence of magnesium or manganese ions, binding of NO to the heme iron increases catalytic activity up to 400 folds. Functionally, mediates responses to nitric oxide (NO) by catalyzing the biosynthesis of the signaling molecule cGMP. This Bos taurus (Bovine) protein is Guanylate cyclase soluble subunit beta-1 (GUCY1B1).